The chain runs to 234 residues: Polycomb group RING finger protein 5-A (234 aa).

The RING-type zinc finger occupies 18–57 (CSICRGYLIKPTAVTECLHTFCKSCIVQHFEESNECPECG). The disordered stretch occupies residues 97-130 (FWRKHKIKSNGEDGPRAKKSRLSGEDDDGNGGDY).

Component of a PRC1-like complex.

It is found in the nucleus. Its function is as follows. Component of Polycomb group (PcG) multiprotein complexes; the complex class is required to maintain the transcriptionally repressive state of some genes. The protein is Polycomb group RING finger protein 5-A of Danio rerio (Zebrafish).